The chain runs to 2260 residues: Reducing polyketide synthase pksF (2260 aa).

A Ketosynthase family 3 (KS3) domain is found at 20–445; that stretch reads VEPIAIVGFG…GTNAHVVLDD (426 aa). Active-site for beta-ketoacyl synthase activity residues include Cys194, His329, and His368. Residues 598–933 form a malonyl-CoA:ACP transacylase (MAT) domain region; it reads FVFTGQGAQW…ECAGKLHTIG (336 aa). The active-site For malonyltransferase activity is Ser689. The interval 984 to 1121 is N-terminal hotdog fold; it reads HELLGSRTPD…GYVAIEYDDR (138 aa). Positions 984-1281 are dehydratase (DH) domain; that stretch reads HELLGSRTPD…FRNKLFSITA (298 aa). The PKS/mFAS DH domain occupies 984–1306; sequence HELLGSRTPD…TSTIGRNSPS (323 aa). The active-site Proton acceptor; for dehydratase activity is His1016. A C-terminal hotdog fold region spans residues 1150-1306; it reads RIAIDSADIY…TSTIGRNSPS (157 aa). Asp1216 acts as the Proton donor; for dehydratase activity in catalysis. The enoylreductase (ER) domain stretch occupies residues 1544 to 1859; the sequence is GILKTLHYEQ…DVDVVEKIVI (316 aa). A ketoreductase (KR) domain region spans residues 1882-2104; the sequence is PDASYLIAGA…LRFCCDPDRV (223 aa). The Carrier domain occupies 2174–2251; sequence QATDIVVEAI…LLAVKVAGKS (78 aa). Position 2211 is an O-(pantetheine 4'-phosphoryl)serine (Ser2211).

It depends on pantetheine 4'-phosphate as a cofactor.

Functionally, reducing polyketide synthase that catalyzes the formation of a C22 intermediate attached to the ACP. Release by intramolecular hydrolysis by the enolized delta-carbonyl would give the pyrone product aslanipyrone. Alternatively, KR-mediated reduction of the beta-carbonyl of the C22 intermediate would form a beta-hydroxy thioester intermediate, which could be a substrate for a further KS-mediated condensation of an additional C2 unit to form a C24 intermediate, which cyclizes by aldol condensation followed by decarboxylation to form aslaniol. Neither aslanipyrone, aslaniol, nor their derivatives have been detected in A.solani, probably due to a low abundance and/or extensive post-PKS modification. It is assumed that the branching point from C22 to C24 is the result of KR activity on the C22 intermediate anchored to the ACP. The protein is Reducing polyketide synthase pksF of Alternaria solani.